We begin with the raw amino-acid sequence, 68 residues long: MCLYCWDIEPSQVNPEGPRQHHPSEVTERQLANKRIQNMQHLKKEKRRLNKRFSRPSPIPEPGLLWSS.

Positions 11 to 68 are disordered; sequence SQVNPEGPRQHHPSEVTERQLANKRIQNMQHLKKEKRRLNKRFSRPSPIPEPGLLWSS. Residues 18–28 are compositionally biased toward basic and acidic residues; the sequence is PRQHHPSEVTE. Positions 27-53 form a coiled coil; it reads TERQLANKRIQNMQHLKKEKRRLNKRF. Residues 41 to 54 are compositionally biased toward basic residues; the sequence is HLKKEKRRLNKRFS.

This is Coiled-coil domain-containing protein 179 (CCDC179) from Homo sapiens (Human).